The primary structure comprises 481 residues: tRNA-2-methylthio-N(6)-dimethylallyladenosine synthase (481 aa).

The region spanning 24-140 (KKLFIESYGC…LPNLLAEVEE (117 aa)) is the MTTase N-terminal domain. [4Fe-4S] cluster is bound by residues Cys-33, Cys-69, Cys-103, Cys-178, Cys-182, and Cys-185. The Radical SAM core domain occupies 164–411 (MSNGITALVS…DLQQKHAWFR (248 aa)). Residues 413 to 476 (EEFVGKTVEV…SGTLKGEAVG (64 aa)) enclose the TRAM domain.

Belongs to the methylthiotransferase family. MiaB subfamily. Monomer. Requires [4Fe-4S] cluster as cofactor.

It is found in the cytoplasm. It catalyses the reaction N(6)-dimethylallyladenosine(37) in tRNA + (sulfur carrier)-SH + AH2 + 2 S-adenosyl-L-methionine = 2-methylsulfanyl-N(6)-dimethylallyladenosine(37) in tRNA + (sulfur carrier)-H + 5'-deoxyadenosine + L-methionine + A + S-adenosyl-L-homocysteine + 2 H(+). In terms of biological role, catalyzes the methylthiolation of N6-(dimethylallyl)adenosine (i(6)A), leading to the formation of 2-methylthio-N6-(dimethylallyl)adenosine (ms(2)i(6)A) at position 37 in tRNAs that read codons beginning with uridine. The protein is tRNA-2-methylthio-N(6)-dimethylallyladenosine synthase of Flavobacterium johnsoniae (strain ATCC 17061 / DSM 2064 / JCM 8514 / BCRC 14874 / CCUG 350202 / NBRC 14942 / NCIMB 11054 / UW101) (Cytophaga johnsonae).